Consider the following 100-residue polypeptide: Small ribosomal subunit protein uS14c (100 aa).

It belongs to the universal ribosomal protein uS14 family. As to quaternary structure, part of the 30S ribosomal subunit.

It is found in the plastid. Its subcellular location is the chloroplast. Functionally, binds 16S rRNA, required for the assembly of 30S particles. The polypeptide is Small ribosomal subunit protein uS14c (Emiliania huxleyi (Coccolithophore)).